Reading from the N-terminus, the 295-residue chain is MAAVSSVASLRGADYENGLRGGAGPSGGGQDPGEDDPMGRGTLDLDLELLTQGRRNRRVGGRTAPGRRSGGRGGSGGGAGGLEELEDEELEEEEPGELTGDQTIEDPELEAIKARVREMEEEAEKLKELQNEVEKQMNMSPPPGNAGPVIMSVEEKMEADARSIYVGNVDYGATAEELEAHFHGCGSVNRVTILCDKFTGHPKGFAYIEFSDKESVRTSLALDESLFRGRQIKVVPKRTNRPGISTTDRGFPRARYRARASSYSSRSRFYSGYTPRPRGRVYRGRARATSWYTPY.

The segment at 1-102 is disordered; that stretch reads MAAVSSVASL…EEPGELTGDQ (102 aa). Gly residues-rich tracts occupy residues 19-31 and 71-81; these read LRGGAGPSGGGQD and GRGGSGGGAGG. Positions 83–96 are enriched in acidic residues; the sequence is EELEDEELEEEEPG. Residues 106-140 adopt a coiled-coil conformation; that stretch reads DPELEAIKARVREMEEEAEKLKELQNEVEKQMNMS. Residues 145–295 are necessary for homooligomerization; the sequence is NAGPVIMSVE…ARATSWYTPY (151 aa). Positions 162-239 constitute an RRM domain; sequence RSIYVGNVDY…RQIKVVPKRT (78 aa).

In terms of assembly, monomer and homooligomer. Binds RNA as a monomer and oligomerizes when bound to poly(A).

Its subcellular location is the nucleus. The protein localises to the cytoplasm. Its function is as follows. Involved in the 3'-end formation of mRNA precursors (pre-mRNA) by the addition of a poly(A) tail of 200-250 nt to the upstream cleavage product. Stimulates poly(A) polymerase (PAPOLA) conferring processivity on the poly(A) tail elongation reaction and also controls the poly(A) tail length. Increases the affinity of poly(A) polymerase for RNA. Binds to poly(A) and to poly(G) with high affinity. May protect the poly(A) tail from degradation. This chain is Polyadenylate-binding protein 2-B (pabpn1-b), found in Xenopus laevis (African clawed frog).